Reading from the N-terminus, the 198-residue chain is MAEKENTKRNRREEILQALAQMLESSDGSQRITTAKLAANVGVSEAALYRHFPSKTRMFDSLIEFIEDTLTSRINLILQDEKDTFHRLRLILLLILGFAERNPGLTRIMTGHALMFEQDRLQGRINQLFERIEAQLRQVLKERRLREGSGFDHDETLLASQLLAFCEGMLSRFVRSEFRYRPTQEFETRWPLLACQLQ.

One can recognise an HTH tetR-type domain in the interval 9–70 (RNRREEILQA…SLIEFIEDTL (62 aa)). Positions 33–52 (TTAKLAANVGVSEAALYRHF) form a DNA-binding region, H-T-H motif. The stretch at 117–144 (EQDRLQGRINQLFERIEAQLRQVLKERR) forms a coiled coil.

The protein belongs to the nucleoid occlusion factor SlmA family. Homodimer. Interacts with FtsZ.

The protein localises to the cytoplasm. It localises to the nucleoid. Its function is as follows. Required for nucleoid occlusion (NO) phenomenon, which prevents Z-ring formation and cell division over the nucleoid. Acts as a DNA-associated cell division inhibitor that binds simultaneously chromosomal DNA and FtsZ, and disrupts the assembly of FtsZ polymers. SlmA-DNA-binding sequences (SBS) are dispersed on non-Ter regions of the chromosome, preventing FtsZ polymerization at these regions. This is Nucleoid occlusion factor SlmA from Edwardsiella ictaluri (strain 93-146).